Consider the following 1330-residue polypeptide: Protein PUTATIVE RECOMBINATION INITIATION DEFECT 1 (1330 aa).

The interval 1310–1330 is disordered; sequence REGRVSPIQEETRQMQTERIV.

In terms of assembly, interacts with SPO11-1. According to PubMed:28855712, may interact with SPO11-2; this is in contradiction with PubMed:9461215 which claims that it seems to not interact with SPO11-2. Binds to DFO, PRD3 and MTOPVIB. Facilitates an interaction between PRD3 and DFO. Expressed in flower buds.

Its subcellular location is the nucleus. Involved in DNA cleavage that forms the double-strand breaks (DSB) that initiate meiotic recombination. The sequence is that of Protein PUTATIVE RECOMBINATION INITIATION DEFECT 1 from Arabidopsis thaliana (Mouse-ear cress).